Here is a 98-residue protein sequence, read N- to C-terminus: NADH-ubiquinone oxidoreductase chain 4L (98 aa).

The next 3 helical transmembrane spans lie at 1–21, 29–49, and 59–79; these read MSLI…GLLM, ALLC…LTAL, and MPII…ALLV.

This sequence belongs to the complex I subunit 4L family. In terms of assembly, core subunit of respiratory chain NADH dehydrogenase (Complex I) which is composed of 45 different subunits.

It localises to the mitochondrion inner membrane. The catalysed reaction is a ubiquinone + NADH + 5 H(+)(in) = a ubiquinol + NAD(+) + 4 H(+)(out). Its function is as follows. Core subunit of the mitochondrial membrane respiratory chain NADH dehydrogenase (Complex I) which catalyzes electron transfer from NADH through the respiratory chain, using ubiquinone as an electron acceptor. Part of the enzyme membrane arm which is embedded in the lipid bilayer and involved in proton translocation. This Hyperoodon ampullatus (Northern bottlenose whale) protein is NADH-ubiquinone oxidoreductase chain 4L (MT-ND4L).